A 396-amino-acid polypeptide reads, in one-letter code: UDP-galactose translocator (396 aa).

10 helical membrane-spanning segments follow: residues 3 to 23 (AVGA…AGAL), 37 to 57 (YISL…IRYA), 65 to 85 (FFAT…CLLL), 97 to 117 (LVLF…KLAV), 140 to 160 (TFQV…VLML), 169 to 189 (WASL…QAGG), 200 to 220 (GAGL…GVYF), 238 to 258 (LGLF…GTAV), 269 to 289 (PAVW…AVVV), and 315 to 335 (LFGF…IGAV). The segment at 358-379 (PCVHQQPPGQPPPPQLSSHRGD) is disordered. Positions 392–396 (KVKGS) match the ER retention motif motif.

It belongs to the nucleotide-sugar transporter family. SLC35A subfamily. In terms of assembly, interacts with SLC35A3; the interaction is reduced in the presence of SLC35A4. Found in a complex with SLC35A3 and SLC35A4. Interacts with B4GALT4.

Its subcellular location is the endoplasmic reticulum membrane. It localises to the golgi apparatus membrane. The catalysed reaction is UMP(out) + UDP-alpha-D-galactose(in) = UMP(in) + UDP-alpha-D-galactose(out). The enzyme catalyses UDP-N-acetyl-alpha-D-galactosamine(in) + UMP(out) = UDP-N-acetyl-alpha-D-galactosamine(out) + UMP(in). It carries out the reaction UMP(out) + UDP-alpha-D-glucose(in) = UMP(in) + UDP-alpha-D-glucose(out). It catalyses the reaction UMP(out) + UDP-N-acetyl-alpha-D-glucosamine(in) = UMP(in) + UDP-N-acetyl-alpha-D-glucosamine(out). The catalysed reaction is UDP-alpha-D-galactose(in) + AMP(out) = UDP-alpha-D-galactose(out) + AMP(in). The enzyme catalyses UDP-alpha-D-galactose(in) + CMP(out) = UDP-alpha-D-galactose(out) + CMP(in). It carries out the reaction UDP-N-acetyl-alpha-D-galactosamine(out) + UDP-alpha-D-galactose(in) = UDP-N-acetyl-alpha-D-galactosamine(in) + UDP-alpha-D-galactose(out). It catalyses the reaction UDP-N-acetyl-alpha-D-glucosamine(out) + UDP-alpha-D-galactose(in) = UDP-N-acetyl-alpha-D-glucosamine(in) + UDP-alpha-D-galactose(out). The catalysed reaction is UDP-alpha-D-galactose(in) + UDP-alpha-D-glucose(out) = UDP-alpha-D-galactose(out) + UDP-alpha-D-glucose(in). The enzyme catalyses UMP(out) + CMP(in) = UMP(in) + CMP(out). It carries out the reaction UMP(out) + AMP(in) = UMP(in) + AMP(out). Functionally, transports uridine diphosphate galactose (UDP-galactose) from the cytosol into the Golgi apparatus, functioning as an antiporter that exchanges UDP-galactose for UMP. It is also able to exchange UDP-galactose for AMP and CMP, and to transport UDP-N-acetylgalactosamine (UDP-GalNAc) and other nucleotide sugars. As a provider of UDP-galactose to galactosyltransferases present in the Golgi apparatus, it is necessary for globotriaosylceramide/globoside (Gb3Cer) synthesis from lactosylceramide. The chain is UDP-galactose translocator from Homo sapiens (Human).